Reading from the N-terminus, the 128-residue chain is uncharacterized protein (128 aa).

It is found in the mitochondrion. This is an uncharacterized protein from Saccharomyces cerevisiae (strain ATCC 204508 / S288c) (Baker's yeast).